A 31-amino-acid polypeptide reads, in one-letter code: Nemertide alpha-7 (31 aa).

3 disulfide bridges follow: Cys2–Cys16, Cys9–Cys20, and Cys15–Cys26. Pro29 is modified (4-hydroxyproline).

It belongs to the nemertide family. In terms of tissue distribution, confined to the epidermis and to the mucus layer.

Its subcellular location is the secreted. Potent toxin, demonstrating strong inhibitory effects on insect sodium channels (Nav) and reduced activity on mammalian sodium channels. Potently inhibits inactivation of insect sodium channels of B.germanica (BgNav1) (EC(50)=9.5 nM). The toxin also delays the inactivation of most mammalian Nav (human Nav1.1/SCN1A; EC(50)=171.5 nM, rat Nav1.2/SCN2A; EC(50)=50.4 nM, rat Nav1.3/SCN3A; EC(50)=170.2 nM, rat Nav1.4/SCN4A; EC(50)=810.6 nM, human Nav1.5/SCN5A; EC(50)=155.6 nM, mouse Nav1.6/SCN8A; EC(50)=147.6 nM, human Nav1.9/SCN9A; EC(50)=129 nM). Inactivation is completely prevented by a concentration of 1 uM, resulting in sustained, non-inactivating currents. In addition, the toxin significantly enhances the recovery from inactivation, and the open state is not required for the toxin to interact with the channel. In vivo, injection into brine shrimp (Artemia salina) stops movement or causes death after 24 hours (EC(50)=6.1 uM). This chain is Nemertide alpha-7, found in Lineus ruber (Red bootlace).